The primary structure comprises 238 residues: Ribosomal RNA small subunit methyltransferase G (238 aa).

Residues G106, L111, 157–158 (IE), and R170 each bind S-adenosyl-L-methionine.

It belongs to the methyltransferase superfamily. RNA methyltransferase RsmG family.

Its subcellular location is the cytoplasm. The enzyme catalyses guanosine(527) in 16S rRNA + S-adenosyl-L-methionine = N(7)-methylguanosine(527) in 16S rRNA + S-adenosyl-L-homocysteine. In terms of biological role, specifically methylates the N7 position of guanine in position 527 of 16S rRNA. The polypeptide is Ribosomal RNA small subunit methyltransferase G (Psychrobacter arcticus (strain DSM 17307 / VKM B-2377 / 273-4)).